A 205-amino-acid chain; its full sequence is UPF0301 protein Bind_0718 (205 aa).

Belongs to the UPF0301 (AlgH) family.

This Beijerinckia indica subsp. indica (strain ATCC 9039 / DSM 1715 / NCIMB 8712) protein is UPF0301 protein Bind_0718.